Reading from the N-terminus, the 191-residue chain is Shikimate kinase (191 aa).

24-29 contacts ATP; sequence GSGKTS. Threonine 28 is a binding site for Mg(2+). Aspartate 46, arginine 70, and glycine 92 together coordinate substrate. Arginine 130 contacts ATP. Arginine 149 provides a ligand contact to substrate.

This sequence belongs to the shikimate kinase family. Monomer. Mg(2+) is required as a cofactor.

The protein resides in the cytoplasm. It carries out the reaction shikimate + ATP = 3-phosphoshikimate + ADP + H(+). Its pathway is metabolic intermediate biosynthesis; chorismate biosynthesis; chorismate from D-erythrose 4-phosphate and phosphoenolpyruvate: step 5/7. In terms of biological role, catalyzes the specific phosphorylation of the 3-hydroxyl group of shikimic acid using ATP as a cosubstrate. The sequence is that of Shikimate kinase from Parasynechococcus marenigrum (strain WH8102).